A 292-amino-acid polypeptide reads, in one-letter code: 4-hydroxy-tetrahydrodipicolinate synthase (292 aa).

Position 45 (T45) interacts with pyruvate. Y133 functions as the Proton donor/acceptor in the catalytic mechanism. K162 functions as the Schiff-base intermediate with substrate in the catalytic mechanism. I204 is a pyruvate binding site.

Belongs to the DapA family. Homotetramer; dimer of dimers.

The protein resides in the cytoplasm. It catalyses the reaction L-aspartate 4-semialdehyde + pyruvate = (2S,4S)-4-hydroxy-2,3,4,5-tetrahydrodipicolinate + H2O + H(+). It participates in amino-acid biosynthesis; L-lysine biosynthesis via DAP pathway; (S)-tetrahydrodipicolinate from L-aspartate: step 3/4. Its function is as follows. Catalyzes the condensation of (S)-aspartate-beta-semialdehyde [(S)-ASA] and pyruvate to 4-hydroxy-tetrahydrodipicolinate (HTPA). The polypeptide is 4-hydroxy-tetrahydrodipicolinate synthase (Nitratidesulfovibrio vulgaris (strain ATCC 29579 / DSM 644 / CCUG 34227 / NCIMB 8303 / VKM B-1760 / Hildenborough) (Desulfovibrio vulgaris)).